Here is a 799-residue protein sequence, read N- to C-terminus: 1-phosphatidylinositol 4,5-bisphosphate phosphodiesterase delta-4 (799 aa).

The region spanning 16–124 (LLMQEGMPMR…WMRGLHLLVD (109 aa)) is the PH domain. The segment at 26-53 (KVRSKSWKKLRYFRLQNDGMTVWHARQA) is substrate binding. 3 consecutive EF-hand domains span residues 134–169 (RLDQ…MNVE), 170–205 (MDQE…LTKR), and 206–237 (AEVQ…EQKE). 10 residues coordinate Ca(2+): Asp147, Asn149, Asp151, Lys153, Glu158, Asp183, Ser185, Ser187, Thr189, and Glu194. The GBA motif lies at 213 to 243 (ESFSADGQKLTLLEFSDFLREEQKERDCTSE). In terms of domain architecture, PI-PLC X-box spans 290–435 (QDMTQPLNHY…LRRKILVKGK (146 aa)). The active site involves His305. Residues Asn306, Glu335, and Asp337 each coordinate Ca(2+). Residue His350 is part of the active site. Residue Glu384 coordinates Ca(2+). Substrate is bound by residues Lys433 and Lys435. Residue Ser460 is modified to Phosphoserine. The PI-PLC Y-box domain maps to 530–646 (LSSLVIYLKS…GYVLKPDFLR (117 aa)). The substrate site is built by Ser559 and Arg586. In terms of domain architecture, C2 spans 646-773 (RDNQSSFHPE…QGYRHIHLLS (128 aa)). Ile687, Asp689, Asn713, Asp742, Tyr743, and Asp744 together coordinate Ca(2+). A PDZ-binding motif is present at residues 768-771 (HIHL).

In terms of assembly, interacts with GRIP1. Interacts (via GBA motif) with guanine nucleotide-binding protein G(i) alpha subunit GNAI3 (inactive GDP-bound form); low-affinity interaction. The cofactor is Ca(2+).

It localises to the membrane. It is found in the nucleus. The protein localises to the cytoplasm. The protein resides in the endoplasmic reticulum. The catalysed reaction is a 1,2-diacyl-sn-glycero-3-phospho-(1D-myo-inositol-4,5-bisphosphate) + H2O = 1D-myo-inositol 1,4,5-trisphosphate + a 1,2-diacyl-sn-glycerol + H(+). The enzyme catalyses a 1,2-diacyl-sn-glycero-3-phospho-(1D-myo-inositol) + H2O = 1D-myo-inositol 1-phosphate + a 1,2-diacyl-sn-glycerol + H(+). Hydrolyzes the phosphatidylinositol 4,5-bisphosphate (PIP2) to generate 2 second messenger molecules diacylglycerol (DAG) and inositol 1,4,5-trisphosphate (IP3). DAG mediates the activation of protein kinase C (PKC), while IP3 releases Ca(2+) from intracellular stores. Required for acrosome reaction in sperm during fertilization, probably by acting as an important enzyme for intracellular Ca(2+) mobilization in the zona pellucida-induced acrosome reaction. May play a role in cell growth. Modulates the liver regeneration in cooperation with nuclear PKC. Overexpression up-regulates the Erk signaling pathway and proliferation. The protein is 1-phosphatidylinositol 4,5-bisphosphate phosphodiesterase delta-4 (PLCD4) of Macaca fascicularis (Crab-eating macaque).